The sequence spans 174 residues: UPF0340 protein SAHV_2098 (174 aa).

The protein belongs to the UPF0340 family.

The polypeptide is UPF0340 protein SAHV_2098 (Staphylococcus aureus (strain Mu3 / ATCC 700698)).